Consider the following 146-residue polypeptide: Large ribosomal subunit protein uL15 (146 aa).

Residues Met-1–Arg-13 are compositionally biased toward basic and acidic residues. The tract at residues Met-1–Arg-59 is disordered. 2 stretches are compositionally biased toward gly residues: residues Thr-23–Gln-35 and Ser-42–Gly-52.

The protein belongs to the universal ribosomal protein uL15 family. Part of the 50S ribosomal subunit.

Binds to the 23S rRNA. The sequence is that of Large ribosomal subunit protein uL15 from Streptococcus agalactiae serotype Ia (strain ATCC 27591 / A909 / CDC SS700).